The primary structure comprises 288 residues: tRNA dimethylallyltransferase (288 aa).

An ATP-binding site is contributed by 17 to 24; it reads GPTASGKS. 19-24 contributes to the substrate binding site; it reads TASGKS.

Belongs to the IPP transferase family. Monomer. Requires Mg(2+) as cofactor.

It catalyses the reaction adenosine(37) in tRNA + dimethylallyl diphosphate = N(6)-dimethylallyladenosine(37) in tRNA + diphosphate. Its function is as follows. Catalyzes the transfer of a dimethylallyl group onto the adenine at position 37 in tRNAs that read codons beginning with uridine, leading to the formation of N6-(dimethylallyl)adenosine (i(6)A). In Ruegeria sp. (strain TM1040) (Silicibacter sp.), this protein is tRNA dimethylallyltransferase.